The following is a 408-amino-acid chain: Diguanylate cyclase DgcN (408 aa).

Residues methionine 1–threonine 24 lie on the Cytoplasmic side of the membrane. Residues serine 25–leucine 45 form a helical membrane-spanning segment. Residues lysine 46–asparagine 52 are Periplasmic-facing. The helical transmembrane segment at leucine 53–glycine 73 threads the bilayer. At proline 74–proline 112 the chain is on the cytoplasmic side. A helical transmembrane segment spans residues glycine 113–isoleucine 133. At arginine 134–histidine 154 the chain is on the periplasmic side. The chain crosses the membrane as a helical span at residues phenylalanine 155–isoleucine 175. Topologically, residues threonine 176–arginine 408 are cytoplasmic. One can recognise an HAMP domain in the interval asparagine 183–leucine 236. The region spanning lysine 278–arginine 408 is the GGDEF domain. A Mg(2+)-binding site is contributed by aspartate 286. Residues asparagine 294, histidine 299, and aspartate 303 each coordinate substrate. Aspartate 329 provides a ligand contact to Mg(2+). The active-site Proton acceptor is the aspartate 329.

As to quaternary structure, homodimer. Interacts with the cell division proteins FtsZ and ZipA. Requires Mg(2+) as cofactor.

The protein resides in the cell inner membrane. The catalysed reaction is 2 GTP = 3',3'-c-di-GMP + 2 diphosphate. It functions in the pathway purine metabolism; 3',5'-cyclic di-GMP biosynthesis. Its activity is regulated as follows. Inhibited by YfiR, which prevents relocation to the midcell. A reductive stress signal is required to inactivate YfiR and turn on the DGC activity of DgcN. Functionally, bifunctional protein that catalyzes the synthesis of cyclic-di-GMP (c-di-GMP) in response to reductive stress and then dynamically relocates to the division site to arrest cell division in response to envelope stress. In the presence of high intracellular c-di-GMP levels, and in response to envelope stress, interacts with cell division proteins and halts cell division, without disassembling the Z ring, but by blocking its further progress toward cytokinesis. Part of a network that regulates cell motility by altering levels of c-di-GMP. In Escherichia coli (strain K12), this protein is Diguanylate cyclase DgcN.